The chain runs to 354 residues: Probable N-acetylmuramoyl-L-alanine amidase (354 aa).

Residues methionine 1–alanine 39 form the signal peptide. An N-acetylmuramoyl-L-alanine amidase domain is found at leucine 40–threonine 152.

Belongs to the N-acetylmuramoyl-L-alanine amidase 2 family.

It is found in the secreted. It catalyses the reaction Hydrolyzes the link between N-acetylmuramoyl residues and L-amino acid residues in certain cell-wall glycopeptides.. The chain is Probable N-acetylmuramoyl-L-alanine amidase from Bacillus licheniformis.